A 2731-amino-acid polypeptide reads, in one-letter code: Teneurin-1 (2731 aa).

Residues 1-72 (MEQTDCKPYQ…KRKDVEKSTQ (72 aa)) form a disordered region. Residues 1–318 (MEQTDCKPYQ…KPYRCCNWKC (318 aa)) form the Teneurin N-terminal domain. Residues 1 to 324 (MEQTDCKPYQ…NWKCTALSAT (324 aa)) lie on the Cytoplasmic side of the membrane. The span at 44–55 (ETLHEYNQELRR) shows a compositional bias: basic and acidic residues. Positions 62-65 (RKRK) match the Nuclear localization signal (NLS) motif. A Phosphoserine modification is found at serine 105. At threonine 109 the chain carries Phosphothreonine. Residue serine 116 is modified to Phosphoserine. The segment at 175-241 (DSAQDMQSSP…PAPPTSTQDS (67 aa)) is disordered. Over residues 178–189 (QDMQSSPHNQFT) the composition is skewed to polar residues. Residues 192–201 (PLPPPPPPPH) show a composition bias toward pro residues. Polar residues predominate over residues 214 to 224 (DSLQRRSMTTR). Positions 290–297 (PPPRPLPR) match the Required for interaction with SORBS1 (Ten-1 ICD form) motif. Residues 325–345 (AITVTLALLLAYVIAVHLFGL) form a helical membrane-spanning segment. Over 346–2731 (TWQLQPVGQI…FMRQSEIGRR (2386 aa)) the chain is Extracellular. N-linked (GlcNAc...) asparagine glycosylation occurs at asparagine 432. 8 EGF-like domains span residues 527 to 558 (IMDD…PDCA), 559 to 590 (RDSC…ECDV), 591 to 623 (PEEQ…EICE), 624 to 656 (EEDC…NCET), 657 to 690 (PLPI…SDCS), 691 to 720 (TELC…GPTC), 721 to 752 (EERS…DHCT), and 760 to 795 (VRDG…TGCN). Cystine bridges form between cysteine 531-cysteine 541, cysteine 535-cysteine 546, cysteine 548-cysteine 557, cysteine 566-cysteine 577, cysteine 579-cysteine 588, cysteine 595-cysteine 606, cysteine 600-cysteine 611, cysteine 613-cysteine 622, cysteine 627-cysteine 638, cysteine 632-cysteine 643, cysteine 645-cysteine 654, cysteine 665-cysteine 678, cysteine 680-cysteine 689, cysteine 694-cysteine 704, cysteine 698-cysteine 709, cysteine 711-cysteine 720, cysteine 725-cysteine 735, cysteine 729-cysteine 740, cysteine 742-cysteine 751, cysteine 764-cysteine 774, cysteine 768-cysteine 783, and cysteine 785-cysteine 794. N-linked (GlcNAc...) asparagine glycans are attached at residues asparagine 904 and asparagine 1083. 5 NHL repeats span residues 1193–1218 (LFAP…VRRI), 1298–1342 (SHCG…NAVI), 1357–1408 (LSCD…IAGR), 1420–1464 (FLVS…VTTN), and 1487–1530 (CFSG…ISKN). A YD 1 repeat occupies 1540–1559 (YEIASPADQELYQFTVNGTH). N-linked (GlcNAc...) asparagine glycans are attached at residues asparagine 1556 and asparagine 1573. YD repeat units lie at residues 1576-1596 (YNAE…VHIR), 1614-1638 (YWLT…ALMT), 1639-1660 (YPGN…TVYE), and 1661-1681 (YDPE…SSFH). Asparagine 1669, asparagine 1705, asparagine 1743, asparagine 1763, asparagine 1787, and asparagine 1848 each carry an N-linked (GlcNAc...) asparagine glycan. 11 YD repeats span residues 1851–1870 (YSPS…EKME), 1871–1891 (YDQS…WSYT), 1892–1910 (YLEK…YIFE), 1911–1931 (YDQS…HSLQ), 1939–1955 (YRNI…FIQD), 1956–1975 (YSRD…RRVL), 1976–1995 (YKYT…TQVT), 1998–2018 (YEES…FICT), 2021–2041 (YRQT…EGLV), 2091–2111 (YDLN…FNAN), and 2119–2139 (YEIL…MGRM). The N-linked (GlcNAc...) asparagine glycan is linked to asparagine 2151. 5 YD repeats span residues 2159–2179 (YDAD…WRYS), 2180–2200 (YDLN…LTPL), 2202–2222 (YDLR…DEDG), 2234–2254 (YNSN…TVQY), and 2256–2276 (YDGL…LQFF). Asparagine 2291 is a glycosylation site (N-linked (GlcNAc...) asparagine). YD repeat units follow at residues 2302 to 2319 (YDLQ…GEEY) and 2320 to 2343 (YVAC…IKEI). Serine 2586 carries the post-translational modification Phosphoserine. An N-linked (GlcNAc...) asparagine glycan is attached at asparagine 2608.

It belongs to the tenascin family. Teneurin subfamily. As to quaternary structure, homodimer; disulfide-linked. Heterodimer with either TENM2 or TENM3. May also form heterodimer with TENM4. Ten-1 ICD interacts with SORBS1 (via third SH3 domain). Interacts with MBD1 isoform 2. Ten-1 ICD interacts with HINT1. Post-translationally, once secreted, may also be cleaved to give rise to the TCAP-1 form. In terms of processing, derives from the plasma membrane form by proteolytic processing. Further proteolytic cleavage may generate 11.9 and 4.7 kDa bioactive peptides. In terms of tissue distribution, isoform 1 and isoform 2 are expressed in the brain. Isoform 2 is expressed in the granular layer of the dentate gyrus and the pyramidal layer (Py) of the CA1, CA2 and CA3 of the hippocampus (at protein level). Expressed in the cortex, thalamus, CA1, CA2, CA3, dentate gyrus and granular layer of the hippocampus. Weakly expressed in kidney, testis and lung.

The protein localises to the cell membrane. Its subcellular location is the cytoplasm. It is found in the secreted. It localises to the nucleus. The protein resides in the nucleus speckle. The protein localises to the nucleus matrix. Its subcellular location is the cytoskeleton. Involved in neural development, regulating the establishment of proper connectivity within the nervous system. May function as a cellular signal transducer. In terms of biological role, plays a role in the regulation of neuroplasticity in the limbic system. Mediates a rapid reorganization of actin- and tubulin-based cytoskeleton elements with an increase in dendritic arborization and spine density formation of neurons in the hippocampus and amygdala. Induces BDNF transcription inhibition in neurons. Activates the mitogen-activated protein (MAP) kinase 2 (MEK2) and extracellular signal-regulated kinase (ERK) cascade. Also acts as a bioactive neuroprotective peptide on limbic neurons of the brain and regulates stress-induced behavior: attenuates alkalosis-associated necrotic cell death and the effects of corticotropin-releasing factor (CRF) on c-fos/FOS induction and on the reinstatement of cocaine seeking. Functionally, induces gene transcription activation. The protein is Teneurin-1 (Tenm1) of Mus musculus (Mouse).